Reading from the N-terminus, the 324-residue chain is Olfactory receptor 8U3 (324 aa).

Topologically, residues 1–25 (MAEVNIIYVTVFILKGITNRPELQA) are extracellular. A helical membrane pass occupies residues 26-46 (PCFGVFLVIYLVTVLGNLGLI). Residues 47–54 (TLIKIDTR) are Cytoplasmic-facing. Residues 55–75 (LHTPMYYFLSHLAFVDLCYSS) form a helical membrane-spanning segment. The Extracellular segment spans residues 76–99 (AITPKMMVNFVVERNTIPFHACAT). Cys-97 and Cys-189 are oxidised to a cystine. A helical membrane pass occupies residues 100 to 120 (QLGCFLTFMITECFLLASMAY). Topologically, residues 121 to 139 (DCYVAICSPLHYSTLMSRR) are cytoplasmic. The chain crosses the membrane as a helical span at residues 140–160 (VCIQLVAVPYIYSFLVALFHT). The Extracellular segment spans residues 161 to 196 (VITFRLTYCGPNLINHFYCDDLPFLALSCSDTHMKE). The helical transmembrane segment at 197–217 (ILIFAFAGFDMISSSSIVLTS) threads the bilayer. The Cytoplasmic portion of the chain corresponds to 218–237 (YIFIIAAILRIRSTQGQHKA). The chain crosses the membrane as a helical span at residues 238–258 (ISTCGSHMVTVTIFYGTLIFM). Topologically, residues 259-271 (YLQPKSNHSLDTD) are extracellular. A glycan (N-linked (GlcNAc...) asparagine) is linked at Asn-265. Residues 272 to 292 (KMASVFYTVVIPMLNPLIYSL) traverse the membrane as a helical segment. Topologically, residues 293–324 (RNKEVKDASKKALDKGCENLQILTFLKIRKLY) are cytoplasmic.

It belongs to the G-protein coupled receptor 1 family.

It localises to the cell membrane. Functionally, odorant receptor. The chain is Olfactory receptor 8U3 from Homo sapiens (Human).